A 686-amino-acid chain; its full sequence is Secretin GspD 2 (686 aa).

An N-terminal signal peptide occupies residues 1–40 (MFWRDITLSVWRKKTTGLKTKKRLLPLVLAAALCSSPVWA). The segment at 41–140 (EEATFTANFK…VGEGSDNYAG (100 aa)) is N0, contacts GspC2. The N1 stretch occupies residues 142 to 206 (EMVTKVVPVR…EVIQRVDHAG (65 aa)). Residues 207 to 279 (NRTEEVIPLD…LIRRLDSEME (73 aa)) form an N2 region. The segment at 282-357 (GNSQVFYLKY…SLQSVIEQLD (76 aa)) is N3. The tract at residues 360 to 627 (RAQVHVEALI…VFIRPTILRD (268 aa)) is secretin. Positions 414–433 (PQKGSTVISENGATTINPDT) are cap gate. Residues 629-686 (MAADGVSQRKYNYMRAEQIYRDEQGLSLMPHTAQPVLPAQNQALPPEVRAFLNAGRTR) are s domain, contacts AspS2.

It belongs to the bacterial secretin family. GSP D subfamily. In terms of assembly, forms a cylindrical channel with 15 subunits, each of which interacts with the surrounding pilotin AspS2 proteins (also called GspS-beta). Interacts with inner cell membrane protein GspC2 in the periplasm. Forms multimers in the outer membrane. The isolated N0 domain forms dimers that self-assemble into rings.

Its subcellular location is the cell outer membrane. Part of a type II secretion system (T2SS, formerly general secretion pathway, GSP) for the export of folded proteins across the outer membrane. This subunit forms the outer membrane channel. This Escherichia coli O78:H11 (strain H10407 / ETEC) protein is Secretin GspD 2 (gspD2).